Consider the following 898-residue polypeptide: Alanine--tRNA ligase (898 aa).

Zn(2+)-binding residues include H582, H586, C685, and H689.

The protein belongs to the class-II aminoacyl-tRNA synthetase family. Requires Zn(2+) as cofactor.

Its subcellular location is the cytoplasm. The enzyme catalyses tRNA(Ala) + L-alanine + ATP = L-alanyl-tRNA(Ala) + AMP + diphosphate. Its function is as follows. Catalyzes the attachment of alanine to tRNA(Ala) in a two-step reaction: alanine is first activated by ATP to form Ala-AMP and then transferred to the acceptor end of tRNA(Ala). Also edits incorrectly charged Ser-tRNA(Ala) and Gly-tRNA(Ala) via its editing domain. The sequence is that of Alanine--tRNA ligase from Mycolicibacterium gilvum (strain PYR-GCK) (Mycobacterium gilvum (strain PYR-GCK)).